We begin with the raw amino-acid sequence, 518 residues long: Putative ribose/galactose/methyl galactoside import ATP-binding protein (518 aa).

The segment at 1-22 (MSIAVLDRPMSRQDTPSASSVP) is disordered. Residues 12–22 (RQDTPSASSVP) show a composition bias toward polar residues. 2 ABC transporter domains span residues 29–265 (LEVR…VGRE) and 275–515 (VPIG…VMEL). 61–68 (GENGAGKS) contacts ATP.

The protein belongs to the ABC transporter superfamily. Carbohydrate importer 2 (CUT2) (TC 3.A.1.2) family.

The protein localises to the cell inner membrane. The enzyme catalyses D-ribose(out) + ATP + H2O = D-ribose(in) + ADP + phosphate + H(+). It catalyses the reaction D-galactose(out) + ATP + H2O = D-galactose(in) + ADP + phosphate + H(+). Functionally, part of an ABC transporter complex involved in carbohydrate import. Could be involved in ribose, galactose and/or methyl galactoside import. Responsible for energy coupling to the transport system. The protein is Putative ribose/galactose/methyl galactoside import ATP-binding protein of Ralstonia nicotianae (strain ATCC BAA-1114 / GMI1000) (Ralstonia solanacearum).